The sequence spans 442 residues: MNFFMEKNKDAGHRVTIKIPKTTVNNSLFQEFIKIRKTTKINGFRKGKTPIRVIQEKYGSAIYYDIFKKLMQKFFYEFLKTEKIKIIGSPKFYIHQDEDKKKEYFEYSVIYELYPQFQIKDIKQIKVNKINVEITEEDIKKNIETNKNKKNIWNPVNKAVKSYDRVTINYCIYEKNKKIKKFDKDNISFIVSKNTLIPQLNYKIINHFVNDIIFFKIKFHAFHPEKELQNKDITFKIKIIKIEKKQELESEKSNKKNITEKKTIQTDYQTIKNNLHSQINIITDKYLENQIIQKIVEKNILLLPPLLFQKEIKNLYKQYTKQYQEENSNILEKKYHMSLDSEVKKRLYFQIIIEQIILNNKLFADENNIQKLIKKISSNYKNPMEIIKLYNKNKNLKNTMKNIELERQAMLLLKKSIKIEKQNWNFERFLNYNWASHEELMV.

Positions 163–248 (YDRVTINYCI…IIKIEKKQEL (86 aa)) constitute a PPIase FKBP-type domain.

It belongs to the FKBP-type PPIase family. Tig subfamily.

Its subcellular location is the cytoplasm. The enzyme catalyses [protein]-peptidylproline (omega=180) = [protein]-peptidylproline (omega=0). Functionally, involved in protein export. Acts as a chaperone by maintaining the newly synthesized protein in an open conformation. Functions as a peptidyl-prolyl cis-trans isomerase. The protein is Trigger factor of Buchnera aphidicola subsp. Acyrthosiphon pisum (strain Tuc7).